The following is a 459-amino-acid chain: Methionine aminopeptidase 2-2 (459 aa).

A compositionally biased stretch (basic and acidic residues) spans 1–12; sequence MGSKSPEDHRQG. The disordered stretch occupies residues 1-87; that stretch reads MGSKSPEDHR…KKLSVVQQTS (87 aa). Residues 43–54 show a composition bias toward acidic residues; sequence GQDEDGDDDDDE. Over residues 55–66 the composition is skewed to basic and acidic residues; sequence KTGIDLKTNDGA. Residues 67-79 are compositionally biased toward basic residues; that stretch reads KKKRKRNKKKSKK. H210 contributes to the substrate binding site. D231, D242, and H311 together coordinate a divalent metal cation. A substrate-binding site is contributed by H319. A divalent metal cation contacts are provided by E344 and E440.

The protein belongs to the peptidase M24A family. Methionine aminopeptidase eukaryotic type 2 subfamily. Co(2+) is required as a cofactor. The cofactor is Zn(2+). Mn(2+) serves as cofactor. Requires Fe(2+) as cofactor.

The protein localises to the cytoplasm. The enzyme catalyses Release of N-terminal amino acids, preferentially methionine, from peptides and arylamides.. Cotranslationally removes the N-terminal methionine from nascent proteins. The N-terminal methionine is often cleaved when the second residue in the primary sequence is small and uncharged (Met-Ala-, Cys, Gly, Pro, Ser, Thr, or Val). This Pyrenophora teres f. teres (strain 0-1) (Barley net blotch fungus) protein is Methionine aminopeptidase 2-2.